A 398-amino-acid polypeptide reads, in one-letter code: Isopenicillin N epimerase (398 aa).

Lys217 is subject to N6-(pyridoxal phosphate)lysine.

The protein belongs to the class-V pyridoxal-phosphate-dependent aminotransferase family. Requires pyridoxal 5'-phosphate as cofactor.

It catalyses the reaction isopenicillin N = penicillin N. It functions in the pathway antibiotic biosynthesis; cephalosporin C biosynthesis. Functionally, catalyzes the reversible isomerization between isopenicillin N and penicillin N. The polypeptide is Isopenicillin N epimerase (cefD) (Streptomyces clavuligerus).